The primary structure comprises 665 residues: Macrolide export ATP-binding/permease protein MacB (665 aa).

In terms of domain architecture, ABC transporter spans methionine 17–lysine 255. Glycine 53–serine 60 lines the ATP pocket. Helical transmembrane passes span leucine 287–glycine 307, isoleucine 544–valine 564, phenylalanine 588–phenylalanine 608, and serine 630–alanine 650.

Belongs to the ABC transporter superfamily. Macrolide exporter (TC 3.A.1.122) family. Homodimer. Part of the tripartite efflux system MacAB-TolC, which is composed of an inner membrane transporter, MacB, a periplasmic membrane fusion protein, MacA, and an outer membrane component, TolC. The complex forms a large protein conduit and can translocate molecules across both the inner and outer membranes. Interacts with MacA.

It localises to the cell inner membrane. Part of the tripartite efflux system MacAB-TolC. MacB is a non-canonical ABC transporter that contains transmembrane domains (TMD), which form a pore in the inner membrane, and an ATP-binding domain (NBD), which is responsible for energy generation. Confers resistance against macrolides. This Psychrobacter arcticus (strain DSM 17307 / VKM B-2377 / 273-4) protein is Macrolide export ATP-binding/permease protein MacB.